The chain runs to 549 residues: Glucose-6-phosphate isomerase 1 (549 aa).

The active-site Proton donor is E358. Residues H389 and K513 contribute to the active site.

This sequence belongs to the GPI family.

The protein resides in the cytoplasm. It catalyses the reaction alpha-D-glucose 6-phosphate = beta-D-fructose 6-phosphate. It functions in the pathway carbohydrate biosynthesis; gluconeogenesis. The protein operates within carbohydrate degradation; glycolysis; D-glyceraldehyde 3-phosphate and glycerone phosphate from D-glucose: step 2/4. In terms of biological role, catalyzes the reversible isomerization of glucose-6-phosphate to fructose-6-phosphate. The polypeptide is Glucose-6-phosphate isomerase 1 (Streptomyces avermitilis (strain ATCC 31267 / DSM 46492 / JCM 5070 / NBRC 14893 / NCIMB 12804 / NRRL 8165 / MA-4680)).